Consider the following 137-residue polypeptide: Ig heavy chain V region MOPC 315 (137 aa).

An N-terminal signal peptide occupies residues 1-18 (MKVLSLLYLLTAIPGIMS). The interval 19–48 (DVQLQESGPGLVKPSQSLSLTCSVTGYSIT) is framework-1. Residues Cys40 and Cys114 are joined by a disulfide bond. The segment at 49-54 (SGYFWN) is complementarity-determining-1. The segment at 55–68 (WIRQFPGNKLEWLG) is framework-2. Residues 69–84 (FIKYDGSNGYNPSLKN) form a complementarity-determining-2 region. The framework-3 stretch occupies residues 85 to 116 (RVSITRDTSENQFFLKLNSVTTEDTATYYCAG). The tract at residues 117-126 (DNDHLYYFDY) is complementarity-determining-3. Residues 127–137 (WGQGTTLTVSS) form a framework-4 region.

This is Ig heavy chain V region MOPC 315 from Mus musculus (Mouse).